Here is a 156-residue protein sequence, read N- to C-terminus: ATP synthase subunit b (156 aa).

A helical membrane pass occupies residues 7 to 29 (LLGQAISFGMFVWFCMKYVWPPI).

The protein belongs to the ATPase B chain family. As to quaternary structure, F-type ATPases have 2 components, F(1) - the catalytic core - and F(0) - the membrane proton channel. F(1) has five subunits: alpha(3), beta(3), gamma(1), delta(1), epsilon(1). F(0) has three main subunits: a(1), b(2) and c(10-14). The alpha and beta chains form an alternating ring which encloses part of the gamma chain. F(1) is attached to F(0) by a central stalk formed by the gamma and epsilon chains, while a peripheral stalk is formed by the delta and b chains.

The protein resides in the cell inner membrane. In terms of biological role, f(1)F(0) ATP synthase produces ATP from ADP in the presence of a proton or sodium gradient. F-type ATPases consist of two structural domains, F(1) containing the extramembraneous catalytic core and F(0) containing the membrane proton channel, linked together by a central stalk and a peripheral stalk. During catalysis, ATP synthesis in the catalytic domain of F(1) is coupled via a rotary mechanism of the central stalk subunits to proton translocation. Component of the F(0) channel, it forms part of the peripheral stalk, linking F(1) to F(0). In Vibrio cholerae serotype O1 (strain ATCC 39541 / Classical Ogawa 395 / O395), this protein is ATP synthase subunit b.